Reading from the N-terminus, the 1492-residue chain is Copper-transporting ATPase 1 (1492 aa).

Topologically, residues 1–645 (MEPNMDANSI…KREIKQWRGS (645 aa)) are cytoplasmic. HMA domains lie at 8–74 (NSIT…FDAL) and 85–151 (TNTV…LDMG). Cu(+) is bound by residues T18, C19, and C22. T152 carries the phosphothreonine modification. One can recognise an HMA 3 domain in the interval 171–237 (VLLKMRVEGM…QIEAVGFPAF (67 aa)). Cu(+)-binding residues include C182 and C185. Position 270 is a phosphoserine (S270). The 67-residue stretch at 277–343 (SAITFTIDGM…AIEAVSPGQY (67 aa)) folds into the HMA 4 domain. Residues C288 and C291 each contribute to the Cu(+) site. Phosphothreonine is present on T327. Phosphoserine is present on residues S339, S353, S357, and S362. HMA domains follow at residues 377–443 (QEVV…FDAV), 480–546 (NKCY…FGAV), and 556–622 (GILE…FEAS). Residues C388, C391, C491, C494, C567, and C570 each contribute to the Cu(+) site. A helical transmembrane segment spans residues 646 to 667 (FLVSLFFCIPVMGLMIYMMVMD). Topologically, residues 668-706 (HHLATLNHNQNMSNEEMINMHSSMFLERQILPGLSIMNL) are extracellular. N-linked (GlcNAc...) asparagine glycosylation occurs at N678. The helical transmembrane segment at 707–726 (LSLLLCLPVQFCGGWYFYIQ) threads the bilayer. At 727–733 (AYKALRH) the chain is on the cytoplasmic side. A helical transmembrane segment spans residues 734-754 (KTANMDVLIVLATTIAFAYSL). Residues 755–773 (VILLVAMYERAKVNPITFF) are Extracellular-facing. Residues 774–794 (DTPPMLFVFIALGRWLEHIAK) form a helical membrane-spanning segment. The Cytoplasmic portion of the chain corresponds to 795-927 (GKTSEALAKL…SKAPIQQFAD (133 aa)). Residues 928 to 951 (KLSGYFVPFIVLVSIVTLLVWIII) form a helical membrane-spanning segment. Residues 952 to 981 (GFQNFEIVEAYFPGYNRSISRTETIIRFAF) are Extracellular-facing. The chain crosses the membrane as a helical span at residues 982–1003 (QASITVLCIACPCSLGLATPTA). At 1004-1348 (VMVGTGVGAQ…LSRKTVKRIR (345 aa)) the chain is on the cytoplasmic side. The 4-aspartylphosphate intermediate role is filled by D1036. E1073 lines the ATP pocket. T1204 is subject to Phosphothreonine. Mg(2+) contacts are provided by D1293 and D1297. The helical transmembrane segment at 1349–1366 (INFVFALIYNLIGIPIAA) threads the bilayer. The Extracellular segment spans residues 1367–1377 (GVFLPIGLVLQ). A helical membrane pass occupies residues 1378 to 1397 (PWMGSAAMAASSVSVVLSSL). Residues 1398–1492 (FLKLYRKPTY…DFREDDDTTL (95 aa)) lie on the Cytoplasmic side of the membrane. 5 positions are modified to phosphoserine: S1422, S1424, S1452, S1455, and S1458. The Endocytosis signal signature appears at 1459–1460 (LL). Phosphoserine occurs at positions 1461, 1465, 1468, and 1478. The segment at 1478–1492 (SLLVGDFREDDDTTL) is PDZD11-binding. Positions 1479–1480 (LL) match the Endocytosis signal motif.

Belongs to the cation transport ATPase (P-type) (TC 3.A.3) family. Type IB subfamily. As to quaternary structure, monomer. Interacts with PDZD11. Interacts with ATOX1 and COMMD1. Interacts with TYRP1. Directly interacts with SOD3; this interaction is copper-dependent and is required for SOD3 activity. Expressed in hippocampal neuron (at protein level). Expressed in anterior pituitary gland (at protein level).

It is found in the golgi apparatus. The protein resides in the trans-Golgi network membrane. It localises to the cell membrane. Its subcellular location is the melanosome membrane. The protein localises to the early endosome membrane. It is found in the cell projection. The protein resides in the axon. It localises to the dendrite. Its subcellular location is the postsynaptic density. It carries out the reaction Cu(+)(in) + ATP + H2O = Cu(+)(out) + ADP + phosphate + H(+). Functionally, ATP-driven copper (Cu(+)) ion pump that plays an important role in intracellular copper ion homeostasis. Within a catalytic cycle, acquires Cu(+) ion from donor protein on the cytoplasmic side of the membrane and delivers it to acceptor protein on the lumenal side. The transfer of Cu(+) ion across the membrane is coupled to ATP hydrolysis and is associated with a transient phosphorylation that shifts the pump conformation from inward-facing to outward-facing state. Under physiological conditions, at low cytosolic copper concentration, it is localized at the trans-Golgi network (TGN) where it transfers Cu(+) ions to cuproenzymes of the secretory pathway. Upon elevated cytosolic copper concentrations, it relocalizes to the plasma membrane where it is responsible for the export of excess Cu(+) ions. May play a dual role in neuron function and survival by regulating cooper efflux and neuronal transmission at the synapse as well as by supplying Cu(+) ions to enzymes such as PAM, TYR and SOD3. In the melanosomes of pigmented cells, provides copper cofactor to TYR to form an active TYR holoenzyme for melanin biosynthesis. The protein is Copper-transporting ATPase 1 of Rattus norvegicus (Rat).